We begin with the raw amino-acid sequence, 249 residues long: DNA repair protein RecO (249 aa).

This sequence belongs to the RecO family.

Its function is as follows. Involved in DNA repair and RecF pathway recombination. The polypeptide is DNA repair protein RecO (Exiguobacterium sp. (strain ATCC BAA-1283 / AT1b)).